We begin with the raw amino-acid sequence, 538 residues long: Importin subunit alpha-4 (538 aa).

An IBB domain is found at 1–58 (MSLRPSTRAELRKKIYKTGVDADEARRRREDNLVEIRKNKREDSLLKKRREGMMLQQQ). ARM repeat units lie at residues 112-152 (SPPI…NVAS), 155-194 (SDHT…NVAG), 197-237 (PNCR…NFCR), 239-278 (KPPT…YLSD), 281-320 (NDKI…NIVT), 323-363 (DSQT…NITA), 366-405 (KLQI…NATS), and 409-448 (HEQI…NILK).

It belongs to the importin alpha family. In terms of assembly, forms a complex with importin subunit beta-1. Interacts with A.tumefaciens VirD2 and VirE2.

The protein resides in the nucleus envelope. Binds to conventional NLS motifs and mediates nuclear protein import across the nuclear envelope. Acts as a cellular receptor for the nuclear import of the virD2 protein of Agrobacterium and is essential for Agrobacterium-mediated root transformation. This Arabidopsis thaliana (Mouse-ear cress) protein is Importin subunit alpha-4.